The following is a 513-amino-acid chain: Mannan endo-1,4-beta-mannosidase A and B (513 aa).

The signal sequence occupies residues 1-26 (MKVYKKVAFVMAFIMFFSVLPTISMS). Residues 41 to 353 (QTTKNVYSWL…FNDSWVVNRG (313 aa)) form the GH26 domain. H132 contributes to the substrate binding site. E195 acts as the Proton donor in catalysis. The substrate site is built by W200 and Y270. The active-site Nucleophile is E295. A substrate-binding site is contributed by 429–430 (IK).

The protein belongs to the glycosyl hydrolase 26 family.

The protein localises to the secreted. The enzyme catalyses Random hydrolysis of (1-&gt;4)-beta-D-mannosidic linkages in mannans, galactomannans and glucomannans.. In terms of biological role, could be involved in the degradation of glucomannan and catalyzes the endo hydrolysis of beta-1,4-linked mannan, galactomannan and glucomannan. In Caldalkalibacillus mannanilyticus (strain DSM 16130 / CIP 109019 / JCM 10596 / AM-001) (Bacillus mannanilyticus), this protein is Mannan endo-1,4-beta-mannosidase A and B.